The primary structure comprises 164 residues: V-type proton ATPase subunit c' (164 aa).

The Lumenal portion of the chain corresponds to 1–16 (MDMVASDNVYAPLYAP). Residues 17 to 37 (FFGFAGCALAMILSCLGAAIG) form a helical membrane-spanning segment. Residues 38 to 59 (TAKSGIGIAGIGTFKPELIMKS) are Cytoplasmic-facing. Residues 60–80 (LIPVVMSGILAIYGLVVAVLI) form a helical membrane-spanning segment. At 81-98 (AGNLSPTEEYTLFNGFMH) the chain is on the lumenal side. Residues 99 to 119 (LSCGLCVGFACLSSGYAIGIV) form a helical membrane-spanning segment. Residues 120 to 136 (GDVGVRKYMHQPRLFVG) are Cytoplasmic-facing. The helical transmembrane segment at 137 to 157 (IVLILIFSEVLGLYGMIIALI) threads the bilayer. The Lumenal segment spans residues 158 to 164 (LNTKGSE).

Belongs to the V-ATPase proteolipid subunit family. As to quaternary structure, V-ATPase is a heteromultimeric enzyme composed of a peripheral catalytic V1 complex (components A to H) attached to an integral membrane V0 proton pore complex (components: a, c, c', c'', d, e, f and VOA1). The decameric c-ring forms the proton-conducting pore, and is composed of eight proteolipid subunits c, one subunit c' and one subunit c''.

The protein resides in the vacuole membrane. In terms of biological role, proton-conducting pore forming subunit of the V0 complex of vacuolar(H+)-ATPase (V-ATPase), a multisubunit enzyme composed of a peripheral complex (V1) that hydrolyzes ATP and a membrane integral complex (V0) that translocates protons. V-ATPase is responsible for acidifying and maintaining the pH of intracellular compartments. The polypeptide is V-type proton ATPase subunit c' (VMA11) (Candida glabrata (strain ATCC 2001 / BCRC 20586 / JCM 3761 / NBRC 0622 / NRRL Y-65 / CBS 138) (Yeast)).